We begin with the raw amino-acid sequence, 274 residues long: Putative phosphoenolpyruvate synthase regulatory protein (274 aa).

154–161 is an ADP binding site; sequence AVSRSGKT.

Belongs to the pyruvate, phosphate/water dikinase regulatory protein family. PSRP subfamily.

The enzyme catalyses [pyruvate, water dikinase] + ADP = [pyruvate, water dikinase]-phosphate + AMP + H(+). The catalysed reaction is [pyruvate, water dikinase]-phosphate + phosphate + H(+) = [pyruvate, water dikinase] + diphosphate. Bifunctional serine/threonine kinase and phosphorylase involved in the regulation of the phosphoenolpyruvate synthase (PEPS) by catalyzing its phosphorylation/dephosphorylation. This Alkalilimnicola ehrlichii (strain ATCC BAA-1101 / DSM 17681 / MLHE-1) protein is Putative phosphoenolpyruvate synthase regulatory protein.